Reading from the N-terminus, the 1052-residue chain is Membrane-bound transcription factor site-1 protease (1052 aa).

The first 17 residues, 1–17 (MKLVNIWLLLLVVLLCG), serve as a signal peptide directing secretion. The propeptide occupies 18 to 186 (KKHLGDRLEK…TGRHSSRRLL (169 aa)). Phosphoserine; by FAM20C is present on Ser-168. Topologically, residues 187-998 (RAIPRQVAQT…IMPGRYNQEV (812 aa)) are lumenal. The 283-residue stretch at 190 to 472 (PRQVAQTLQA…HGKLDLLRAY (283 aa)) folds into the Peptidase S8 domain. The active-site Charge relay system is Asp-218. Asn-236 carries N-linked (GlcNAc...) asparagine glycosylation. Catalysis depends on His-249, which acts as the Charge relay system. A glycan (N-linked (GlcNAc...) asparagine) is linked at Asn-305. The Charge relay system role is filled by Ser-414. Asn-515 and Asn-728 each carry an N-linked (GlcNAc...) asparagine glycan. The span at 877–887 (PSLSHSGNRQR) shows a compositional bias: polar residues. The interval 877-899 (PSLSHSGNRQRPPSGAGSVTPER) is disordered. The N-linked (GlcNAc...) asparagine glycan is linked to Asn-939. The helical transmembrane segment at 999–1021 (GQTIPVFAFLGAMVVLAFFVVQI) threads the bilayer. Residues 1022–1052 (NKAKSRPKRRKPRVKRPQLMQQVHPPKTPSV) lie on the Cytoplasmic side of the membrane. Positions 1027–1037 (RPKRRKPRVKR) are enriched in basic residues. The disordered stretch occupies residues 1027–1052 (RPKRRKPRVKRPQLMQQVHPPKTPSV).

The protein belongs to the peptidase S8 family. As to quaternary structure, interacts with LYSET; this interaction bridges GNPTAB to MBTPS1. Requires Ca(2+) as cofactor. The 148 kDa zymogen is processed progressively into two membrane-bound 120 and 106 kDa forms in the endoplasmic reticulum, and late into a secreted 98 kDa form. The propeptide is autocatalytically removed through an intramolecular cleavage after Leu-186. Further cleavage generates 14, 10, and 8 kDa intermediates. In terms of tissue distribution, widely expressed.

It is found in the endoplasmic reticulum membrane. Its subcellular location is the golgi apparatus membrane. It catalyses the reaction Processes precursors containing basic and hydrophobic/aliphatic residues at P4 and P2, respectively, with a relatively relaxed acceptance of amino acids at P1 and P3.. Its activity is regulated as follows. Inhibited by divalent copper and zinc ions, but not by nickel or cobalt. Inhibited by its prosegment, but not smaller fragments. Inhibited by 4-(2-aminoethyl)benzenesulfonyl fluoride (AEBSF), a serine protease inhibitor. Functionally, serine protease that cleaves after hydrophobic or small residues, provided that Arg or Lys is in position P4: known substrates include SREBF1/SREBP1, SREBF2/SREBP2, BDNF, GNPTAB, ATF6, ATF6B and FAM20C. Cleaves substrates after Arg-Ser-Val-Leu (SREBP2), Arg-His-Leu-Leu (ATF6), Arg-Gly-Leu-Thr (BDNF) and its own propeptide after Arg-Arg-Leu-Leu. Catalyzes the first step in the proteolytic activation of the sterol regulatory element-binding proteins (SREBPs) SREBF1/SREBP1 and SREBF2/SREBP2. Also mediates the first step in the proteolytic activation of the cyclic AMP-dependent transcription factor ATF-6 (ATF6 and ATF6B). Mediates the protein cleavage of GNPTAB into subunit alpha and beta, thereby participating in biogenesis of lysosomes. Cleaves the propeptide from FAM20C which is required for FAM20C secretion from the Golgi apparatus membrane and for enhancement of FAM20C kinase activity, promoting osteoblast differentiation and biomineralization. Involved in the regulation of M6P-dependent Golgi-to-lysosome trafficking of lysosomal enzymes. It is required for the activation of CREB3L2/BBF2H7, a transcriptional activator of MIA3/TANGO and other genes controlling mega vesicle formation. Therefore, it plays a key role in the regulation of mega vesicle-mediated collagen trafficking. In astrocytes and osteoblasts, upon DNA damage and ER stress, mediates the first step of the regulated intramembrane proteolytic activation of the transcription factor CREB3L1, leading to the inhibition of cell-cycle progression. This chain is Membrane-bound transcription factor site-1 protease, found in Homo sapiens (Human).